Reading from the N-terminus, the 426-residue chain is Serine--tRNA ligase (426 aa).

235 to 237 is an L-serine binding site; sequence TAE. 266-268 is a binding site for ATP; that stretch reads RRE. Residue Glu-289 coordinates L-serine. Residue 353–356 participates in ATP binding; sequence EISS. Residue Ser-389 coordinates L-serine.

This sequence belongs to the class-II aminoacyl-tRNA synthetase family. Type-1 seryl-tRNA synthetase subfamily. As to quaternary structure, homodimer. The tRNA molecule binds across the dimer.

It localises to the cytoplasm. The enzyme catalyses tRNA(Ser) + L-serine + ATP = L-seryl-tRNA(Ser) + AMP + diphosphate + H(+). The catalysed reaction is tRNA(Sec) + L-serine + ATP = L-seryl-tRNA(Sec) + AMP + diphosphate + H(+). It functions in the pathway aminoacyl-tRNA biosynthesis; selenocysteinyl-tRNA(Sec) biosynthesis; L-seryl-tRNA(Sec) from L-serine and tRNA(Sec): step 1/1. Catalyzes the attachment of serine to tRNA(Ser). Is also able to aminoacylate tRNA(Sec) with serine, to form the misacylated tRNA L-seryl-tRNA(Sec), which will be further converted into selenocysteinyl-tRNA(Sec). This chain is Serine--tRNA ligase, found in Nostoc punctiforme (strain ATCC 29133 / PCC 73102).